Consider the following 688-residue polypeptide: Translation initiation factor IF-2 (688 aa).

A disordered region spans residues 62 to 103 (EFEVEEKVVRSKKNSNKKKKKGKGNEDKRQDNFAGRQQTQIV). Positions 71 to 83 (RSKKNSNKKKKKG) are enriched in basic residues. In terms of domain architecture, tr-type G spans 190-359 (ERPAVVTIMG…LLVSEVEEYK (170 aa)). A G1 region spans residues 199–206 (GHVDHGKT). 199 to 206 (GHVDHGKT) is a binding site for GTP. The tract at residues 224–228 (GITQH) is G2. A G3 region spans residues 245–248 (DTPG). GTP contacts are provided by residues 245–249 (DTPGH) and 299–302 (NKMD). Residues 299-302 (NKMD) are G4. The tract at residues 335–337 (SAI) is G5.

It belongs to the TRAFAC class translation factor GTPase superfamily. Classic translation factor GTPase family. IF-2 subfamily.

The protein localises to the cytoplasm. Its function is as follows. One of the essential components for the initiation of protein synthesis. Protects formylmethionyl-tRNA from spontaneous hydrolysis and promotes its binding to the 30S ribosomal subunits. Also involved in the hydrolysis of GTP during the formation of the 70S ribosomal complex. The protein is Translation initiation factor IF-2 of Bacillus cereus (strain G9842).